A 2224-amino-acid chain; its full sequence is Myomegalin (2224 aa).

Coiled coils occupy residues R41–E97, D162–E205, V236–L318, and C350–Q682. Residues P206 to V236 are disordered. Polar residues predominate over residues P219–V236. The disordered stretch occupies residues G703–A751. T705 bears the Phosphothreonine mark. A compositionally biased stretch (basic and acidic residues) spans S724 to S738. 3 coiled-coil regions span residues G745 to D822, N856 to Y886, and A949 to S986. Disordered regions lie at residues T1098–L1128, N1141–K1161, and V1270–S1298. Residues E1112 to Q1124 are compositionally biased toward polar residues. Coiled-coil stretches lie at residues S1159–T1187, D1295–T1331, and G1377–T1401. A compositionally biased stretch (basic and acidic residues) spans K1276–S1298. The region spanning K1497–S1588 is the Olduvai domain. Disordered stretches follow at residues T1576–Q1637, S1736–G1757, L1805–E1824, and K1962–P2001. Over residues E1599–T1609 the composition is skewed to polar residues. The segment covering G1748–G1757 has biased composition (low complexity). A coiled-coil region spans residues G1769–R1958. Residues K2148 to F2191 adopt a coiled-coil conformation.

Interacts with PDE4D. Isoform 2 interacts with MAPRE1 and MAPRE3. Isoform 2 forms a pericentrosomal complex with AKAP9, CDK5RAP2 and EB1/MAPRE1; within this complex, may mediate MAPRE1-binding to CDK5RAP2. Interaction with AKAP9 stabilizes both proteins. Isoform 2 interacts (via N-terminus) with CAMSAP2; this interaction is much stronger in the presence of AKAP9. In complex with AKAP9, Isoform 2 recruits CAMSAP2 to the Golgi apparatus. Isoform 2 interacts with unglycosylated LGALS3BP; this interaction may connect the pericentrosomal complex to the gamma-tubulin ring complex (gamma-TuRC) to promote microtubule assembly and acetylation.

The protein localises to the cytoplasm. The protein resides in the cytoskeleton. It localises to the microtubule organizing center. Its subcellular location is the centrosome. It is found in the golgi apparatus. Its function is as follows. Functions as an anchor sequestering components of the cAMP-dependent pathway to Golgi and/or centrosomes. Functionally, participates in microtubule dynamics, promoting microtubule assembly. Depending upon the cell context, may act at the level of the Golgi apparatus or that of the centrosome. In complex with AKAP9, recruits CAMSAP2 to the Golgi apparatus and tethers non-centrosomal minus-end microtubules to the Golgi, an important step for polarized cell movement. In complex with AKAP9, EB1/MAPRE1 and CDK5RAP2, contributes to microtubules nucleation and extension from the centrosome to the cell periphery, a crucial process for directed cell migration, mitotic spindle orientation and cell-cycle progression. In Mus musculus (Mouse), this protein is Myomegalin (Pde4dip).